A 105-amino-acid chain; its full sequence is Small ribosomal subunit protein uS10 (105 aa).

The protein belongs to the universal ribosomal protein uS10 family. As to quaternary structure, part of the 30S ribosomal subunit.

Involved in the binding of tRNA to the ribosomes. The protein is Small ribosomal subunit protein uS10 of Acaryochloris marina (strain MBIC 11017).